The sequence spans 393 residues: Protein shisa-9B (393 aa).

A signal peptide spans Met1–Ala20. Topologically, residues Glu21–Lys131 are extracellular. A disordered region spans residues Leu28–His52. Asn38 is a glycosylation site (N-linked (GlcNAc...) asparagine). Residues Thr132–Phe152 traverse the membrane as a helical segment. Residues Thr153 to Val393 lie on the Cytoplasmic side of the membrane. Positions Gln307 to Ser340 are disordered. Residues Asn310 to Ser321 show a composition bias toward basic residues.

It belongs to the shisa family. SHISA9 subfamily. Component of some AMPA receptors (ionotropic glutamate receptors) complex.

It localises to the cell projection. The protein localises to the dendritic spine membrane. The protein resides in the synapse. In terms of biological role, regulator of short-term neuronal synaptic plasticity in the dentate gyrus. Associates with AMPA receptors (ionotropic glutamate receptors) in synaptic spines and promotes AMPA receptor desensitization at excitatory synapses. This Danio rerio (Zebrafish) protein is Protein shisa-9B (shisa9b).